The sequence spans 247 residues: Peroxisomal membrane protein 11A (247 aa).

The Cytoplasmic segment spans residues 1-83 (MDAFIRFTNQ…SVRATDLVPR (83 aa)). A helical membrane pass occupies residues 84–105 (ICLTLASLNRVIYFICDTVLFV). At 106 to 219 (RSTGLASGVN…DQLGIYKSNP (114 aa)) the chain is on the lumenal side. Residues 220 to 239 (GIIGLGGLVSSVAGIITVAY) traverse the membrane as a helical segment. The tract at residues 220-239 (GIIGLGGLVSSVAGIITVAY) is required for homodimerization, interaction with PEX11G, and peroxisomal localization. Residues 240 to 247 (PQMKLKTQ) are Cytoplasmic-facing.

It belongs to the peroxin-11 family. As to quaternary structure, homodimer. Heterodimer with PEX11G. Probably interacts with COPB2 and COPA. Interacts with PEX19. Interacts with FIS1.

The protein localises to the peroxisome membrane. Its function is as follows. May be involved in peroxisomal proliferation and may regulate peroxisomes division. May mediate binding of coatomer proteins to the peroxisomal membrane. Promotes membrane protrusion and elongation on the peroxisomal surface. This chain is Peroxisomal membrane protein 11A (PEX11A), found in Bos taurus (Bovine).